We begin with the raw amino-acid sequence, 95 residues long: U8-barytoxin-Tl1a (95 aa).

The signal sequence occupies residues 1–21; that stretch reads MKTLVLVAVLGLASLYLLSYA. The propeptide occupies 22–50; it reads SEVQQLSVAEEEFGALIDAFGGLLETEER. Intrachain disulfides connect C57–C71, C64–C76, and C70–C86.

This sequence belongs to the neurotoxin 10 (Hwtx-1) family. 26 (ICK-1) subfamily. As to expression, expressed by the venom gland.

It localises to the secreted. Functionally, ion channel inhibitor. The sequence is that of U8-barytoxin-Tl1a from Trittame loki (Brush-footed trapdoor spider).